Consider the following 378-residue polypeptide: Probable pectin lyase A (378 aa).

A signal peptide spans 1 to 19 (MKFPAFITAIISIASLSSA). Disulfide bonds link Cys-82–Cys-101 and Cys-91–Cys-225. Arg-255 is a catalytic residue. The cysteines at positions 321 and 329 are disulfide-linked.

This sequence belongs to the polysaccharide lyase 1 family.

The protein resides in the secreted. The enzyme catalyses Eliminative cleavage of (1-&gt;4)-alpha-D-galacturonan methyl ester to give oligosaccharides with 4-deoxy-6-O-methyl-alpha-D-galact-4-enuronosyl groups at their non-reducing ends.. Its function is as follows. Pectinolytic enzymes consist of four classes of enzymes: pectin lyase, polygalacturonase, pectin methylesterase and rhamnogalacturonase. Among pectinolytic enzymes, pectin lyase is the most important in depolymerization of pectin, since it cleaves internal glycosidic bonds of highly methylated pectins. This chain is Probable pectin lyase A (pelA), found in Aspergillus terreus (strain NIH 2624 / FGSC A1156).